A 31-amino-acid chain; its full sequence is Fibrinogen beta chain (31 aa).

The segment covering 1 to 10 (HYYDDTDEEE) has biased composition (acidic residues). Positions 1–31 (HYYDDTDEEERIVSTVDARGHRPLDKKREEA) are disordered. Tyr2 is modified (sulfotyrosine; partial). Tyr3 is subject to Sulfotyrosine. A compositionally biased stretch (basic and acidic residues) spans 18 to 31 (ARGHRPLDKKREEA).

Heterohexamer; disulfide linked. Contains 2 sets of 3 non-identical chains (alpha, beta and gamma). The 2 heterotrimers are in head to head conformation with the N-termini in a small central domain. In terms of processing, conversion of fibrinogen to fibrin is triggered by thrombin, which cleaves fibrinopeptides A and B from alpha and beta chains, and thus exposes the N-terminal polymerization sites responsible for the formation of the soft clot.

The protein resides in the secreted. Cleaved by the protease thrombin to yield monomers which, together with fibrinogen alpha (FGA) and fibrinogen gamma (FGG), polymerize to form an insoluble fibrin matrix. Fibrin has a major function in hemostasis as one of the primary components of blood clots. In addition, functions during the early stages of wound repair to stabilize the lesion and guide cell migration during re-epithelialization. Was originally thought to be essential for platelet aggregation, based on in vitro studies using anticoagulated blood. However subsequent studies have shown that it is not absolutely required for thrombus formation in vivo. Enhances expression of SELP in activated platelets. Maternal fibrinogen is essential for successful pregnancy. Fibrin deposition is also associated with infection, where it protects against IFNG-mediated hemorrhage. May also facilitate the antibacterial immune response via both innate and T-cell mediated pathways. The polypeptide is Fibrinogen beta chain (FGB) (Canis lupus familiaris (Dog)).